A 199-amino-acid polypeptide reads, in one-letter code: FMN-dependent NADH:quinone oxidoreductase 2 (199 aa).

FMN-binding positions include serine 10, 16–18, and 96–99; these read SVS and MYNF.

This sequence belongs to the azoreductase type 1 family. In terms of assembly, homodimer. FMN is required as a cofactor.

It carries out the reaction 2 a quinone + NADH + H(+) = 2 a 1,4-benzosemiquinone + NAD(+). The catalysed reaction is N,N-dimethyl-1,4-phenylenediamine + anthranilate + 2 NAD(+) = 2-(4-dimethylaminophenyl)diazenylbenzoate + 2 NADH + 2 H(+). Quinone reductase that provides resistance to thiol-specific stress caused by electrophilic quinones. In terms of biological role, also exhibits azoreductase activity. Catalyzes the reductive cleavage of the azo bond in aromatic azo compounds to the corresponding amines. The sequence is that of FMN-dependent NADH:quinone oxidoreductase 2 from Pseudomonas fluorescens (strain Pf0-1).